Here is a 199-residue protein sequence, read N- to C-terminus: Recombination protein RecR (199 aa).

The C4-type zinc finger occupies 56–71; that stretch reads CAVCGNIAEETQCRIC. Residues 79 to 174 form the Toprim domain; that stretch reads TVICVVEEPK…KVTRLASGLP (96 aa).

This sequence belongs to the RecR family.

In terms of biological role, may play a role in DNA repair. It seems to be involved in an RecBC-independent recombinational process of DNA repair. It may act with RecF and RecO. The protein is Recombination protein RecR of Thermobifida fusca (strain YX).